We begin with the raw amino-acid sequence, 422 residues long: MAKNIQAIRGMNDCLPTQSPLWQKVESAVKSVVSAYGYNEVRMPIVEETNLFSRAVGEETDVVSKEMYTFDDRNGDSLTLRPEGTAGCVRSCIQNSLINRDEQRLWYMGPMFRHERPQKGRYRQFHQCGVEVFGLDGPDVDAELIMMTARLWRELGIDKHVRLELNSIGSQEDRVSYRTALVAFLEQHIDVLDEDCKRRMHTNPLRVLDTKNPDVQAILGDAPRLSEYLGEESKQHFAGLCELLDAVGIEYQVNERLVRGLDYYNRTVFEWITDSLGAQGTVCGGGRYDGLVEQLGGKATNAVGFAMGLERLVLMMETLELTEVRRSVDVYMVAAGEGTMIAGMQLANQLRDTVEGVRVMNHFGGGNFKKQFKRADKVGAVVALVLGENEVADNTVVLKDLVGGEQQTVSQTEVAEKVAALI.

This sequence belongs to the class-II aminoacyl-tRNA synthetase family. As to quaternary structure, homodimer.

It localises to the cytoplasm. The enzyme catalyses tRNA(His) + L-histidine + ATP = L-histidyl-tRNA(His) + AMP + diphosphate + H(+). In Vibrio atlanticus (strain LGP32) (Vibrio splendidus (strain Mel32)), this protein is Histidine--tRNA ligase.